Reading from the N-terminus, the 638-residue chain is Gamma-aminobutyric acid receptor subunit theta (638 aa).

Positions 1–21 are cleaved as a signal peptide; the sequence is MGIRGMLRAAALLLLIRTWLA. Topologically, residues 22-267 are extracellular; it reads ESNGPSPTPK…FQVQREVRSY (246 aa). A glycan (N-linked (GlcNAc...) asparagine) is linked at Asn127. Cysteines 183 and 197 form a disulfide. A helical transmembrane segment spans residues 268-288; that stretch reads LVQVYWPTVLTTILSWISFWM. Residues 289 to 296 lie on the Cytoplasmic side of the membrane; it reads NYDSSAAR. Residues 297–314 traverse the membrane as a helical segment; that stretch reads VTIGLTSILVLTTIDSHM. At 315–325 the chain is on the extracellular side; the sequence is RDKLPHISCIK. The helical transmembrane segment at 326–346 threads the bilayer; that stretch reads AIDIYILVCLFFVFLSLLEYV. The Cytoplasmic segment spans residues 347 to 617; that stretch reads YINYLFFSQV…NRVPKVDRWS (271 aa). A disordered region spans residues 491-515; it reads ACDDEDSEESLSSEESHGHGSSHTG. Residues 492-502 are compositionally biased toward acidic residues; the sequence is CDDEDSEESLS. A helical transmembrane segment spans residues 618-638; sequence RFLFPLSFGLFNVVYWLYHVY.

Belongs to the ligand-gated ion channel (TC 1.A.9) family. Gamma-aminobutyric acid receptor (TC 1.A.9.5) subfamily. GABRQ sub-subfamily. In terms of assembly, heteropentamer, formed by a combination of alpha (GABRA1-6), beta (GABRB1-3), gamma (GABRG1-3), delta (GABRD), epsilon (GABRE), rho (GABRR1-3), pi (GABRP) and theta (GABRQ) chains, each subunit exhibiting distinct physiological and pharmacological properties. As to expression, expressed in brain, lung, and spleen.

It is found in the postsynaptic cell membrane. The protein resides in the cell membrane. It catalyses the reaction chloride(in) = chloride(out). With respect to regulation, potentiated by etomidate, propofol, pregnanolone and pentobarbital. Theta subunit of the heteropentameric ligand-gated chloride channel gated by gamma-aminobutyric acid (GABA), a major inhibitory neurotransmitter in the brain. GABA-gated chloride channels, also named GABA(A) receptors (GABAAR), consist of five subunits arranged around a central pore and contain GABA active binding site(s) located at the alpha and beta subunit interfaces. When activated by GABA, GABAARs selectively allow the flow of chloride anions across the cell membrane down their electrochemical gradient. This is Gamma-aminobutyric acid receptor subunit theta from Mus musculus (Mouse).